A 216-amino-acid polypeptide reads, in one-letter code: Uridine kinase (216 aa).

Position 16–23 (16–23) interacts with ATP; sequence GASASGKS.

The protein belongs to the uridine kinase family.

Its subcellular location is the cytoplasm. The enzyme catalyses uridine + ATP = UMP + ADP + H(+). The catalysed reaction is cytidine + ATP = CMP + ADP + H(+). The protein operates within pyrimidine metabolism; CTP biosynthesis via salvage pathway; CTP from cytidine: step 1/3. It participates in pyrimidine metabolism; UMP biosynthesis via salvage pathway; UMP from uridine: step 1/1. The chain is Uridine kinase from Pasteurella multocida (strain Pm70).